The chain runs to 115 residues: Non-specific lipid-transfer protein (115 aa).

Positions 1–24 (MASSAVIKLALVVALCMAVSVAHA) are cleaved as a signal peptide. 4 disulfide bridges follow: cysteine 27–cysteine 74, cysteine 37–cysteine 51, cysteine 52–cysteine 97, and cysteine 72–cysteine 111.

Belongs to the plant LTP family.

Plant non-specific lipid-transfer proteins transfer phospholipids as well as galactolipids across membranes. May play a role in wax or cutin deposition in the cell walls of expanding epidermal cells and certain secretory tissues. The chain is Non-specific lipid-transfer protein from Pyrus communis (Pear).